Reading from the N-terminus, the 208-residue chain is 2-phospho-L-lactate guanylyltransferase (208 aa).

This sequence belongs to the CofC family. In terms of assembly, homodimer.

It catalyses the reaction (2S)-2-phospholactate + GTP + H(+) = (2S)-lactyl-2-diphospho-5'-guanosine + diphosphate. It functions in the pathway cofactor biosynthesis; coenzyme F420 biosynthesis. Functionally, guanylyltransferase that catalyzes the activation of (2S)-2-phospholactate (2-PL) as (2S)-lactyl-2-diphospho-5'-guanosine, via the condensation of 2-PL with GTP. It is involved in the biosynthesis of coenzyme F420, a hydride carrier cofactor. This is 2-phospho-L-lactate guanylyltransferase from Methanosarcina barkeri (strain Fusaro / DSM 804).